The primary structure comprises 342 residues: uncharacterized protein (342 aa).

Zn(2+)-binding residues include C41, H63, C94, C97, C100, C108, and E149.

It belongs to the zinc-containing alcohol dehydrogenase family. It depends on Zn(2+) as a cofactor.

This is an uncharacterized protein from Haemophilus influenzae (strain ATCC 51907 / DSM 11121 / KW20 / Rd).